Reading from the N-terminus, the 222-residue chain is Putative N-acetylmannosamine-6-phosphate 2-epimerase (222 aa).

This sequence belongs to the NanE family.

The catalysed reaction is an N-acyl-D-glucosamine 6-phosphate = an N-acyl-D-mannosamine 6-phosphate. Its pathway is amino-sugar metabolism; N-acetylneuraminate degradation; D-fructose 6-phosphate from N-acetylneuraminate: step 3/5. Its function is as follows. Converts N-acetylmannosamine-6-phosphate (ManNAc-6-P) to N-acetylglucosamine-6-phosphate (GlcNAc-6-P). The protein is Putative N-acetylmannosamine-6-phosphate 2-epimerase of Staphylococcus aureus (strain MSSA476).